Consider the following 156-residue polypeptide: Small ribosomal subunit protein uS7 (156 aa).

It belongs to the universal ribosomal protein uS7 family. As to quaternary structure, part of the 30S ribosomal subunit. Contacts proteins S9 and S11.

Its function is as follows. One of the primary rRNA binding proteins, it binds directly to 16S rRNA where it nucleates assembly of the head domain of the 30S subunit. Is located at the subunit interface close to the decoding center, probably blocks exit of the E-site tRNA. This chain is Small ribosomal subunit protein uS7, found in Shewanella halifaxensis (strain HAW-EB4).